The primary structure comprises 184 residues: ATP synthase subunit delta (184 aa).

Belongs to the ATPase delta chain family. F-type ATPases have 2 components, F(1) - the catalytic core - and F(0) - the membrane proton channel. F(1) has five subunits: alpha(3), beta(3), gamma(1), delta(1), epsilon(1). F(0) has three main subunits: a(1), b(2) and c(10-14). The alpha and beta chains form an alternating ring which encloses part of the gamma chain. F(1) is attached to F(0) by a central stalk formed by the gamma and epsilon chains, while a peripheral stalk is formed by the delta and b chains.

It localises to the cell inner membrane. F(1)F(0) ATP synthase produces ATP from ADP in the presence of a proton or sodium gradient. F-type ATPases consist of two structural domains, F(1) containing the extramembraneous catalytic core and F(0) containing the membrane proton channel, linked together by a central stalk and a peripheral stalk. During catalysis, ATP synthesis in the catalytic domain of F(1) is coupled via a rotary mechanism of the central stalk subunits to proton translocation. In terms of biological role, this protein is part of the stalk that links CF(0) to CF(1). It either transmits conformational changes from CF(0) to CF(1) or is implicated in proton conduction. In Zymomonas mobilis subsp. mobilis (strain ATCC 31821 / ZM4 / CP4), this protein is ATP synthase subunit delta.